The following is a 114-amino-acid chain: Probable 4-amino-4-deoxy-L-arabinose-phosphoundecaprenol flippase subunit ArnE (114 aa).

3 helical membrane passes run 38–58, 64–84, and 94–114; these read LTLRWLAIAVVSLGLGMLLWL, LPLSVAYPMLSFNFVLVTLAA, and LRHWLGVAAIMFGILLMSWHL. Residues 43–112 form the EamA domain; sequence LAIAVVSLGL…IMFGILLMSW (70 aa).

It belongs to the ArnE family. In terms of assembly, heterodimer of ArnE and ArnF.

The protein localises to the cell inner membrane. It functions in the pathway bacterial outer membrane biogenesis; lipopolysaccharide biosynthesis. Its function is as follows. Translocates 4-amino-4-deoxy-L-arabinose-phosphoundecaprenol (alpha-L-Ara4N-phosphoundecaprenol) from the cytoplasmic to the periplasmic side of the inner membrane. The polypeptide is Probable 4-amino-4-deoxy-L-arabinose-phosphoundecaprenol flippase subunit ArnE (Yersinia pseudotuberculosis serotype O:3 (strain YPIII)).